Reading from the N-terminus, the 532-residue chain is Chondroitin sulfate N-acetylgalactosaminyltransferase 1 (532 aa).

Topologically, residues 1–14 (MMMVRRGLLAWISR) are cytoplasmic. A helical; Signal-anchor for type II membrane protein membrane pass occupies residues 15-35 (VVVLLVLLCCAISVLYMLACT). Over 36 to 532 (PKGDEEQLAL…QKQKTSSKKT (497 aa)) the chain is Lumenal. A coiled-coil region spans residues 57-100 (YQAVLQEWEEQHRNYVSSLKRQIAQLKEELQERSEQLRNGQYQA). N-linked (GlcNAc...) asparagine glycans are attached at residues asparagine 315 and asparagine 324. 2 residues coordinate a divalent metal cation: aspartate 360 and histidine 477.

The protein belongs to the chondroitin N-acetylgalactosaminyltransferase family. Post-translationally, N-glycosylated. Ubiquitous, with the highest levels in placenta, thyroid, bladder, prostate and adrenal gland. Detected at low levels in the other tissues examined.

It is found in the golgi apparatus. The protein resides in the golgi stack membrane. It catalyses the reaction 3-O-(beta-D-GlcA-(1-&gt;3)-beta-D-Gal-(1-&gt;3)-beta-D-Gal-(1-&gt;4)-beta-D-Xyl)-L-seryl-[protein] + UDP-N-acetyl-alpha-D-galactosamine = 3-O-(beta-D-GalNAc-(1-&gt;4)-beta-D-GlcA-(1-&gt;3)-beta-D-Gal-(1-&gt;3)-beta-D-Gal-(1-&gt;4)-beta-D-Xyl)-L-seryl-[protein] + UDP + H(+). Functionally, transfers 1,4-N-acetylgalactosamine (GalNAc) from UDP-GalNAc to the non-reducing end of glucuronic acid (GlcUA). Required for addition of the first GalNAc to the core tetrasaccharide linker and for elongation of chondroitin chains. Important role in chondroitin chain biosynthesis in cartilage formation and subsequent endochondral ossification. Moreover, is involved in the metabolism of aggrecan. The protein is Chondroitin sulfate N-acetylgalactosaminyltransferase 1 of Homo sapiens (Human).